Reading from the N-terminus, the 548-residue chain is Membrane protein insertase YidC (548 aa).

A helical transmembrane segment spans residues 6 to 26 (NLLVIALLFVSFMIWQAWEQD). Positions 28–56 (NPQPQTQQTTQTTTTAAGSAADQGVPASG) are disordered. Over residues 29 to 42 (PQPQTQQTTQTTTT) the composition is skewed to low complexity. Transmembrane regions (helical) follow at residues 350–370 (FVGN…GIMY), 424–444 (FPLI…MGSI), 458–478 (LSAQ…MFFI), and 499–519 (PVIF…YYIV).

The protein belongs to the OXA1/ALB3/YidC family. Type 1 subfamily. As to quaternary structure, interacts with the Sec translocase complex via SecD. Specifically interacts with transmembrane segments of nascent integral membrane proteins during membrane integration.

It is found in the cell inner membrane. Functionally, required for the insertion and/or proper folding and/or complex formation of integral membrane proteins into the membrane. Involved in integration of membrane proteins that insert both dependently and independently of the Sec translocase complex, as well as at least some lipoproteins. Aids folding of multispanning membrane proteins. The chain is Membrane protein insertase YidC from Salmonella typhimurium (strain LT2 / SGSC1412 / ATCC 700720).